We begin with the raw amino-acid sequence, 299 residues long: Phosphoribosylaminoimidazole-succinocarboxamide synthase (299 aa).

The protein belongs to the SAICAR synthetase family.

It carries out the reaction 5-amino-1-(5-phospho-D-ribosyl)imidazole-4-carboxylate + L-aspartate + ATP = (2S)-2-[5-amino-1-(5-phospho-beta-D-ribosyl)imidazole-4-carboxamido]succinate + ADP + phosphate + 2 H(+). Its pathway is purine metabolism; IMP biosynthesis via de novo pathway; 5-amino-1-(5-phospho-D-ribosyl)imidazole-4-carboxamide from 5-amino-1-(5-phospho-D-ribosyl)imidazole-4-carboxylate: step 1/2. The chain is Phosphoribosylaminoimidazole-succinocarboxamide synthase from Leifsonia xyli subsp. xyli (strain CTCB07).